We begin with the raw amino-acid sequence, 505 residues long: Probable alpha-L-arabinofuranosidase C (505 aa).

N-linked (GlcNAc...) asparagine glycans are attached at residues Asn-152, Asn-181, and Asn-269.

The protein belongs to the glycosyl hydrolase 51 family.

Its subcellular location is the secreted. The catalysed reaction is Hydrolysis of terminal non-reducing alpha-L-arabinofuranoside residues in alpha-L-arabinosides.. It participates in glycan metabolism; L-arabinan degradation. Alpha-L-arabinofuranosidase involved in the degradation of arabinoxylan, a major component of plant hemicellulose. Acts only on small linear 1,5-alpha-linked L-arabinofuranosyl oligosaccharides. The sequence is that of Probable alpha-L-arabinofuranosidase C (abfC) from Aspergillus niger (strain ATCC MYA-4892 / CBS 513.88 / FGSC A1513).